Here is a 177-residue protein sequence, read N- to C-terminus: 3-hydroxyanthranilate 3,4-dioxygenase (177 aa).

O2 is bound at residue R47. Residues H51, E57, and H95 each coordinate Fe cation. Residue E57 coordinates substrate. Substrate contacts are provided by R99 and E110. Fe cation contacts are provided by C125, C128, C162, and C165.

This sequence belongs to the 3-HAO family. Homodimer. Fe(2+) is required as a cofactor.

It carries out the reaction 3-hydroxyanthranilate + O2 = (2Z,4Z)-2-amino-3-carboxymuconate 6-semialdehyde. Its pathway is cofactor biosynthesis; NAD(+) biosynthesis; quinolinate from L-kynurenine: step 3/3. Its function is as follows. Catalyzes the oxidative ring opening of 3-hydroxyanthranilate to 2-amino-3-carboxymuconate semialdehyde, which spontaneously cyclizes to quinolinate. The chain is 3-hydroxyanthranilate 3,4-dioxygenase from Burkholderia cenocepacia (strain ATCC BAA-245 / DSM 16553 / LMG 16656 / NCTC 13227 / J2315 / CF5610) (Burkholderia cepacia (strain J2315)).